We begin with the raw amino-acid sequence, 264 residues long: Adenosylcobinamide-GDP ribazoletransferase (264 aa).

The next 7 membrane-spanning stretches (helical) occupy residues 10-30, 43-63, 113-133, 141-161, 183-203, 205-225, and 243-263; these read LFFI…VGYT, LVGA…AQVW, LGSY…VALY, VQAL…PVAL, VSDA…AAAW, LGAS…LAAF, and GAAQ…GVWF.

Belongs to the CobS family. Mg(2+) serves as cofactor.

The protein resides in the cell inner membrane. The enzyme catalyses alpha-ribazole + adenosylcob(III)inamide-GDP = adenosylcob(III)alamin + GMP + H(+). It carries out the reaction alpha-ribazole 5'-phosphate + adenosylcob(III)inamide-GDP = adenosylcob(III)alamin 5'-phosphate + GMP + H(+). The protein operates within cofactor biosynthesis; adenosylcobalamin biosynthesis; adenosylcobalamin from cob(II)yrinate a,c-diamide: step 7/7. Its function is as follows. Joins adenosylcobinamide-GDP and alpha-ribazole to generate adenosylcobalamin (Ado-cobalamin). Also synthesizes adenosylcobalamin 5'-phosphate from adenosylcobinamide-GDP and alpha-ribazole 5'-phosphate. The sequence is that of Adenosylcobinamide-GDP ribazoletransferase from Leptothrix cholodnii (strain ATCC 51168 / LMG 8142 / SP-6) (Leptothrix discophora (strain SP-6)).